The chain runs to 188 residues: dCTP deaminase (188 aa).

Residues K111–R116, T135–E137, Q156, Y170, and Q180 each bind dCTP. E137 (proton donor/acceptor) is an active-site residue.

Belongs to the dCTP deaminase family. Homotrimer.

It catalyses the reaction dCTP + H2O + H(+) = dUTP + NH4(+). The protein operates within pyrimidine metabolism; dUMP biosynthesis; dUMP from dCTP (dUTP route): step 1/2. Its function is as follows. Catalyzes the deamination of dCTP to dUTP. This chain is dCTP deaminase, found in Methylococcus capsulatus (strain ATCC 33009 / NCIMB 11132 / Bath).